The following is a 236-amino-acid chain: Small ribosomal subunit protein uS3 (236 aa).

Positions 39-107 (IREFLTEELK…DTSLNIVEVR (69 aa)) constitute a KH type-2 domain. Residues 214–236 (ASERRAVEGDNQGSSSNRRRENA) are disordered.

The protein belongs to the universal ribosomal protein uS3 family. As to quaternary structure, part of the 30S ribosomal subunit. Forms a tight complex with proteins S10 and S14.

Its function is as follows. Binds the lower part of the 30S subunit head. Binds mRNA in the 70S ribosome, positioning it for translation. This is Small ribosomal subunit protein uS3 from Brucella melitensis biotype 1 (strain ATCC 23456 / CCUG 17765 / NCTC 10094 / 16M).